We begin with the raw amino-acid sequence, 1119 residues long: DNA-directed RNA polymerase subunit beta (1119 aa).

Belongs to the RNA polymerase beta chain family. The RNAP catalytic core consists of 2 alpha, 1 beta, 1 beta' and 1 omega subunit. When a sigma factor is associated with the core the holoenzyme is formed, which can initiate transcription.

The enzyme catalyses RNA(n) + a ribonucleoside 5'-triphosphate = RNA(n+1) + diphosphate. In terms of biological role, DNA-dependent RNA polymerase catalyzes the transcription of DNA into RNA using the four ribonucleoside triphosphates as substrates. The protein is DNA-directed RNA polymerase subunit beta of Thermus thermophilus (strain ATCC BAA-163 / DSM 7039 / HB27).